Here is a 702-residue protein sequence, read N- to C-terminus: Elongation factor G 2 (702 aa).

The tr-type G domain maps to 8 to 290 (ERYRNIGISA…AVIDYLPSPV (283 aa)). Residues 17–24 (AHIDAGKT), 88–92 (DTPGH), and 142–145 (NKMD) contribute to the GTP site.

This sequence belongs to the TRAFAC class translation factor GTPase superfamily. Classic translation factor GTPase family. EF-G/EF-2 subfamily.

It is found in the cytoplasm. Functionally, catalyzes the GTP-dependent ribosomal translocation step during translation elongation. During this step, the ribosome changes from the pre-translocational (PRE) to the post-translocational (POST) state as the newly formed A-site-bound peptidyl-tRNA and P-site-bound deacylated tRNA move to the P and E sites, respectively. Catalyzes the coordinated movement of the two tRNA molecules, the mRNA and conformational changes in the ribosome. The sequence is that of Elongation factor G 2 from Cupriavidus metallidurans (strain ATCC 43123 / DSM 2839 / NBRC 102507 / CH34) (Ralstonia metallidurans).